Consider the following 362-residue polypeptide: Salactin (362 aa).

The span at 1–10 shows a compositional bias: acidic residues; the sequence is MSDDTEDDSG. Positions 1-28 are disordered; that stretch reads MSDDTEDDSGGESTADMEFGEQPAPLGV.

In terms of assembly, forms dynamically unstable filaments. Monomers are added at the growing filament end. In vitro, salactin polymerizes in the presence of ATP and AMP-PNP but not in the presence of ADP, GTP, ATPgammaS or buffer alone.

The protein localises to the cytoplasm. Functionally, actin homolog which might be involved in partitioning DNA between daughter cells when chromosomal copy number is low. The protein is Salactin of Halobacterium salinarum (strain ATCC 700922 / JCM 11081 / NRC-1) (Halobacterium halobium).